A 732-amino-acid polypeptide reads, in one-letter code: Adducin-related protein 1 (732 aa).

2 disordered regions span residues 1–22 (MIGR…DPEY) and 684–732 (TRFS…KKDK). Residues 685–705 (RFSSTQGTSEGNTTSRSCTTA) are compositionally biased toward polar residues. The segment covering 716-732 (KKKKKKGFLSFMRKKDK) has biased composition (basic residues).

Belongs to the aldolase class II family. Adducin subfamily.

It localises to the cytoplasm. It is found in the cytoskeleton. The protein localises to the cell membrane. Membrane-cytoskeleton-associated protein that promotes the assembly of the spectrin-actin network. Plays a role in time-dependent memmory loss and the retention of conditioned behavior over time. This chain is Adducin-related protein 1, found in Caenorhabditis elegans.